A 731-amino-acid polypeptide reads, in one-letter code: Cell death abnormality protein 12 (731 aa).

Residues 339–485 (AEVQKILDIE…VVLEQLRHVL (147 aa)) enclose the ELMO domain. A PH domain is found at 544–679 (VRINHLNYLK…WLEGLAELIG (136 aa)). An SH3-binding motif is present at residues 715–718 (PEIP).

In terms of assembly, interacts with psr-1. Forms a ternary complex with ced-2 and ced-5.

The protein localises to the cytoplasm. Involved in programmed apoptosis and necrosis. Required for the cell corpse engulfment process. Has roles in the formation of actin halos and distal tip cell migration. Negatively regulates the unc-6/Netrin receptor unc-5 to control distal tip cell migration along the anterior-posterior axis of the body. Plays no role in amphid axon outgrowth. This chain is Cell death abnormality protein 12, found in Caenorhabditis elegans.